Here is a 502-residue protein sequence, read N- to C-terminus: ATP synthase subunit beta (502 aa).

153–160 contacts ATP; that stretch reads GGAGVGKT.

Belongs to the ATPase alpha/beta chains family. In terms of assembly, F-type ATPases have 2 components, CF(1) - the catalytic core - and CF(0) - the membrane proton channel. CF(1) has five subunits: alpha(3), beta(3), gamma(1), delta(1), epsilon(1). CF(0) has three main subunits: a(1), b(2) and c(9-12). The alpha and beta chains form an alternating ring which encloses part of the gamma chain. CF(1) is attached to CF(0) by a central stalk formed by the gamma and epsilon chains, while a peripheral stalk is formed by the delta and b chains.

Its subcellular location is the cell membrane. It catalyses the reaction ATP + H2O + 4 H(+)(in) = ADP + phosphate + 5 H(+)(out). In terms of biological role, produces ATP from ADP in the presence of a proton gradient across the membrane. The catalytic sites are hosted primarily by the beta subunits. The chain is ATP synthase subunit beta from Amoebophilus asiaticus (strain 5a2).